Here is a 98-residue protein sequence, read N- to C-terminus: uncharacterized protein (98 aa).

This is an uncharacterized protein from Bacillus subtilis (strain 168).